The chain runs to 265 residues: Taurine import ATP-binding protein TauB (265 aa).

Residues 7-236 enclose the ABC transporter domain; the sequence is QNLNMIFKTP…MGIDGDLREI (230 aa). 41–48 contacts ATP; that stretch reads GPSGCGKT.

The protein belongs to the ABC transporter superfamily. Taurine importer (TC 3.A.1.17.1) family. As to quaternary structure, the complex is composed of two ATP-binding proteins (TauB), two transmembrane proteins (TauC) and a solute-binding protein (TauA).

The protein localises to the cell inner membrane. It catalyses the reaction taurine(out) + ATP + H2O = taurine(in) + ADP + phosphate + H(+). Part of the ABC transporter complex TauABC involved in taurine import. Responsible for energy coupling to the transport system. The sequence is that of Taurine import ATP-binding protein TauB from Pelagibacter ubique (strain HTCC1062).